A 477-amino-acid chain; its full sequence is Glycogen synthase (477 aa).

K15 contributes to the ADP-alpha-D-glucose binding site.

This sequence belongs to the glycosyltransferase 1 family. Bacterial/plant glycogen synthase subfamily.

The catalysed reaction is [(1-&gt;4)-alpha-D-glucosyl](n) + ADP-alpha-D-glucose = [(1-&gt;4)-alpha-D-glucosyl](n+1) + ADP + H(+). It participates in glycan biosynthesis; glycogen biosynthesis. Its function is as follows. Synthesizes alpha-1,4-glucan chains using ADP-glucose. This Salmonella typhi protein is Glycogen synthase.